A 168-amino-acid polypeptide reads, in one-letter code: uncharacterized protein (168 aa).

Over residues 1–10 the composition is skewed to pro residues; the sequence is MSPTTGPQPN. Disordered stretches follow at residues 1–23 and 117–143; these read MSPT…TGPQ and EPGN…RGPQ.

This is an uncharacterized protein from Homo sapiens (Human).